Reading from the N-terminus, the 221-residue chain is Orotidine 5'-phosphate decarboxylase (221 aa).

Substrate contacts are provided by residues D12, K34, 60–69, S117, 170–180, G193, and R194; these read DFKVADIPNT and PGVGAQGGKAS. The active-site Proton donor is the K62.

This sequence belongs to the OMP decarboxylase family. Type 1 subfamily. In terms of assembly, homodimer.

It catalyses the reaction orotidine 5'-phosphate + H(+) = UMP + CO2. Its pathway is pyrimidine metabolism; UMP biosynthesis via de novo pathway; UMP from orotate: step 2/2. Its function is as follows. Catalyzes the decarboxylation of orotidine 5'-monophosphate (OMP) to uridine 5'-monophosphate (UMP). This chain is Orotidine 5'-phosphate decarboxylase, found in Methanosarcina acetivorans (strain ATCC 35395 / DSM 2834 / JCM 12185 / C2A).